Consider the following 90-residue polypeptide: Small ribosomal subunit protein uS15 (90 aa).

The protein belongs to the universal ribosomal protein uS15 family. In terms of assembly, part of the 30S ribosomal subunit. Forms a bridge to the 50S subunit in the 70S ribosome, contacting the 23S rRNA.

Functionally, one of the primary rRNA binding proteins, it binds directly to 16S rRNA where it helps nucleate assembly of the platform of the 30S subunit by binding and bridging several RNA helices of the 16S rRNA. Its function is as follows. Forms an intersubunit bridge (bridge B4) with the 23S rRNA of the 50S subunit in the ribosome. In Wolinella succinogenes (strain ATCC 29543 / DSM 1740 / CCUG 13145 / JCM 31913 / LMG 7466 / NCTC 11488 / FDC 602W) (Vibrio succinogenes), this protein is Small ribosomal subunit protein uS15.